The following is a 609-amino-acid chain: Ovochymase-2 (609 aa).

The N-terminal stretch at Met-1–Ser-22 is a signal peptide. The propeptide at Glu-23–Arg-51 is activation peptide. The region spanning Ile-52–Gln-299 is the Peptidase S1 domain. A disulfide bond links Cys-77 and Cys-93. His-92 serves as the catalytic Charge relay system. A glycan (N-linked (GlcNAc...) asparagine) is linked at Asn-104. Glu-119 contributes to the Ca(2+) binding site. Asp-142 acts as the Charge relay system in catalysis. 4 disulfide bridges follow: Cys-176-Cys-246, Cys-207-Cys-225, Cys-236-Cys-265, and Cys-311-Cys-341. Ser-240 (charge relay system) is an active-site residue. CUB domains are found at residues Cys-311–Leu-421 and Cys-431–Ile-543. N-linked (GlcNAc...) asparagine glycosylation occurs at Asn-356. Cys-365 and Cys-384 are disulfide-bonded. Asn-415 carries an N-linked (GlcNAc...) asparagine glycan. 2 cysteine pairs are disulfide-bonded: Cys-431-Cys-458 and Cys-485-Cys-506. N-linked (GlcNAc...) asparagine glycosylation is found at Asn-530 and Asn-549. The tract at residues His-580–His-609 is disordered.

Belongs to the peptidase S1 family. In terms of tissue distribution, only expressed in uterus tissue. Expressed in the initial segment (IS) of the caput epididymis, the region most proximal to the testis.

The protein localises to the secreted. In terms of biological role, may be required for sperm ADAM3 processing and consequential sperm fertilizing ability. In vitro, has an endopeptidase activity. The protein is Ovochymase-2 of Mus musculus (Mouse).